Reading from the N-terminus, the 388-residue chain is L-lactate dehydrogenase (388 aa).

The FMN hydroxy acid dehydrogenase domain maps to 1–380; the sequence is MIISAASDYR…SADALSRVTR (380 aa). Tyr24 is a binding site for substrate. 2 residues coordinate FMN: Ser106 and Gln127. Tyr129 provides a ligand contact to substrate. Thr155 provides a ligand contact to FMN. Arg164 is a binding site for substrate. An FMN-binding site is contributed by Lys251. The Proton acceptor role is filled by His275. Position 278 (Arg278) interacts with substrate. 306 to 330 provides a ligand contact to FMN; it reads DSGIRSGLDVVRMLALGADAVLLGR.

It belongs to the FMN-dependent alpha-hydroxy acid dehydrogenase family. It depends on FMN as a cofactor.

It is found in the cell inner membrane. The catalysed reaction is (S)-lactate + A = pyruvate + AH2. Its function is as follows. Catalyzes the conversion of L-lactate to pyruvate. Is coupled to the respiratory chain. The sequence is that of L-lactate dehydrogenase from Xanthomonas oryzae pv. oryzae (strain MAFF 311018).